The chain runs to 118 residues: Large ribosomal subunit protein mL53 (118 aa).

The interval 99–118 is disordered; the sequence is AAAASAPGADKVAPGTSTRR.

The protein belongs to the mitochondrion-specific ribosomal protein mL53 family. In terms of assembly, component of the mitochondrial ribosome large subunit (39S) which comprises a 16S rRNA and about 50 distinct proteins.

Its subcellular location is the mitochondrion. The sequence is that of Large ribosomal subunit protein mL53 (Mrpl53) from Mus musculus (Mouse).